We begin with the raw amino-acid sequence, 174 residues long: uncharacterized protein (174 aa).

This sequence to E.coli HemX C-terminal region.

This is an uncharacterized protein from Haemophilus influenzae (strain ATCC 51907 / DSM 11121 / KW20 / Rd).